A 458-amino-acid chain; its full sequence is Gamma aminobutyrate transaminase 2 (458 aa).

114 to 115 (GS) is a binding site for pyridoxal 5'-phosphate. Substrate is bound at residue Y147. D254 is a binding site for pyridoxal 5'-phosphate. A substrate-binding site is contributed by K283. K283 is subject to N6-(pyridoxal phosphate)lysine.

This sequence belongs to the class-III pyridoxal-phosphate-dependent aminotransferase family. Expressed in leaves, roots, stems, flowers and fruits. Expressed in carpels, but not in stamens.

The protein localises to the cytoplasm. The enzyme catalyses 4-aminobutanoate + pyruvate = succinate semialdehyde + L-alanine. It catalyses the reaction 4-aminobutanoate + glyoxylate = succinate semialdehyde + glycine. In terms of biological role, transaminase that degrades gamma-amino butyric acid (GABA) and uses pyruvate or glyoxylate as amino-group acceptor. Cannot use beta-alanine, ornithine, acetylornithine, serine, glycine, asparagine, glutamine, glutamate, valine, leucine, isoleucine, methionine, phenylalanine, histidine, lysine, arginine, aspartate, threonine, tyrosine, tryptophan, proline, or cysteine as amino donors. May be responsible for establishing the GABA gradient in the carpel. The protein is Gamma aminobutyrate transaminase 2 (GABA-TP2) of Solanum lycopersicum (Tomato).